The primary structure comprises 300 residues: GTPase Era (300 aa).

The region spanning 4 to 172 (KSGFVALAGK…LEKIKEELPE (169 aa)) is the Era-type G domain. A G1 region spans residues 12–19 (GKPNVGKS). A GTP-binding site is contributed by 12–19 (GKPNVGKS). Residues 38–42 (QTTRN) form a G2 region. The interval 59–62 (DTPG) is G3. GTP-binding positions include 59–63 (DTPGI) and 121–124 (NKID). The segment at 121 to 124 (NKID) is G4. The interval 151–153 (ISA) is G5. The region spanning 195–280 (IREKIFHLTR…YLDLNVKVKE (86 aa)) is the KH type-2 domain.

Belongs to the TRAFAC class TrmE-Era-EngA-EngB-Septin-like GTPase superfamily. Era GTPase family. As to quaternary structure, monomer.

It localises to the cytoplasm. Its subcellular location is the cell inner membrane. An essential GTPase that binds both GDP and GTP, with rapid nucleotide exchange. Plays a role in 16S rRNA processing and 30S ribosomal subunit biogenesis and possibly also in cell cycle regulation and energy metabolism. The sequence is that of GTPase Era from Thermotoga petrophila (strain ATCC BAA-488 / DSM 13995 / JCM 10881 / RKU-1).